Reading from the N-terminus, the 633-residue chain is Protein CASP (633 aa).

Residues 1-601 (MAVASEALLQ…LLFSRATRGL (601 aa)) lie on the Cytoplasmic side of the membrane. Positions 39–60 (QKTSLDERKELSSKTKEFRKQP) are disordered. Coiled-coil stretches lie at residues 111–339 (IEAA…LANK) and 369–433 (SLES…VDVE). Residues 602–622 (FFMYLILLHLFIMIVLLKLGI) traverse the membrane as a helical; Anchor for type IV membrane protein segment. The Lumenal segment spans residues 623–633 (AGNTAYTPMNY).

Belongs to the CASP family.

Its subcellular location is the golgi apparatus membrane. Its function is as follows. May be involved in intra-Golgi transport. In Schizosaccharomyces pombe (strain 972 / ATCC 24843) (Fission yeast), this protein is Protein CASP (coy1).